The chain runs to 201 residues: MSRYRGPRLRISRRLGDLPGLTRKISKKLSPAGEHGQQLRKPSEYSLRLEEKQKLRFNYGLSEKQLSKYIKIAKKVTGSTGLILLQILEMRLDNVIFRLGLSPTLPAARQLVNHGHILINKQKVSICSYQCKPGDIIDVQAKDSSQNLVKRYLSFPTLVGIPNHLELNTKTLNAKINAIVERESVALQMNELLVVEYYSRK.

In terms of domain architecture, S4 RNA-binding spans 90–153 (MRLDNVIFRL…SSQNLVKRYL (64 aa)).

The protein belongs to the universal ribosomal protein uS4 family. As to quaternary structure, part of the 30S ribosomal subunit. Contacts protein S5. The interaction surface between S4 and S5 is involved in control of translational fidelity.

The protein resides in the plastid. The protein localises to the chloroplast. Its function is as follows. One of the primary rRNA binding proteins, it binds directly to 16S rRNA where it nucleates assembly of the body of the 30S subunit. With S5 and S12 plays an important role in translational accuracy. The protein is Small ribosomal subunit protein uS4c (rps4) of Gracilaria tenuistipitata var. liui (Red alga).